Reading from the N-terminus, the 191-residue chain is A-type ATP synthase subunit E (191 aa).

Belongs to the V-ATPase E subunit family. Has multiple subunits with at least A(3), B(3), C, D, E, F, H, I and proteolipid K(x). Post-translationally, the N-terminus is blocked.

It is found in the cell membrane. Functionally, component of the A-type ATP synthase that produces ATP from ADP in the presence of a proton gradient across the membrane. In Sulfurisphaera tokodaii (strain DSM 16993 / JCM 10545 / NBRC 100140 / 7) (Sulfolobus tokodaii), this protein is A-type ATP synthase subunit E.